A 594-amino-acid chain; its full sequence is Probable glucose transporter rco-3 (594 aa).

The Cytoplasmic portion of the chain corresponds to 1-13 (MAIFAMGWQKPDN). A helical membrane pass occupies residues 14–34 (VAGSSAPAIMVGLFVATGGLL). The Extracellular segment spans residues 35–73 (LGYDTGTINGILAMKSFKDHFSTGYIDGNGQPGIYPKES). Residues 74 to 94 (ALIVAMLSAGTAIGALLAAPL) form a helical membrane-spanning segment. Residues 95–103 (GDHYGRRRS) lie on the Cytoplasmic side of the membrane. The helical transmembrane segment at 104 to 124 (LIGAIGIFVIGAILQVCAYNI) threads the bilayer. A topological domain (extracellular) is located at residue Asp125. Residues 126–146 (LLVAGRTVAGVGIGIVSVLVP) traverse the membrane as a helical segment. Residues 147–159 (LYQSEMAPKWIRG) are Cytoplasmic-facing. The chain crosses the membrane as a helical span at residues 160-180 (TLVCTYQLSITMGLLAAAVVN). The Extracellular segment spans residues 181-193 (ILTYKLKTAAAYR). Residues 194 to 214 (VPIGLQLTWACVLALGLTVLP) traverse the membrane as a helical segment. The Cytoplasmic portion of the chain corresponds to 215–293 (ETPRYLIKRG…TGCCLQMLQQ (79 aa)). A helical membrane pass occupies residues 294–314 (LTGVNFIMYYGTTFFNNAGVG). The Extracellular portion of the chain corresponds to 315–318 (NPFK). Residues 319–339 (ISLIMQVINTASTIPGLFVVE) traverse the membrane as a helical segment. The Cytoplasmic portion of the chain corresponds to 340–345 (SWGRRR). Residues 346–366 (LLMVGAIGMAICQLLIAAFAT) form a helical membrane-spanning segment. The Extracellular portion of the chain corresponds to 367-378 (ASGSNNLSAQNK). Residue Asn372 is glycosylated (N-linked (GlcNAc...) asparagine). Residues 379 to 403 (VLITFVAIYIFFFAASWGPVVWVVT) form a helical membrane-spanning segment. Residues 404-415 (SEIYPLKVRAKS) lie on the Cytoplasmic side of the membrane. The chain crosses the membrane as a helical span at residues 416–436 (MSITTASNWFLNFGIAYGTPY). Topologically, residues 437 to 454 (MQTNSAASDESSIDLGSK) are extracellular. A helical membrane pass occupies residues 455 to 475 (VFFVWGAFCIVAVGFVWCMVY). Residues 476-594 (ETSKISLEQI…ASLGNIDLSY (119 aa)) are Cytoplasmic-facing. The tract at residues 512-594 (DLGFSDGGIP…ASLGNIDLSY (83 aa)) is disordered. The segment covering 524 to 576 (QQLQQQPQQPQQQQQQHHQQQQHQLQVDLQQSQSRTSNSSTSQTDTGGSNNTG) has biased composition (low complexity).

Belongs to the major facilitator superfamily. Sugar transporter (TC 2.A.1.1) family.

It localises to the membrane. In terms of biological role, probable glucose transporter. Involved in sugar transport, carbon catabolite repression, and initiation of conidiophore development. This chain is Probable glucose transporter rco-3 (rco-3), found in Neurospora crassa (strain ATCC 24698 / 74-OR23-1A / CBS 708.71 / DSM 1257 / FGSC 987).